A 309-amino-acid chain; its full sequence is Homoserine kinase (309 aa).

91–101 (PIGSGLGSSAC) contributes to the ATP binding site.

The protein belongs to the GHMP kinase family. Homoserine kinase subfamily.

It localises to the cytoplasm. The enzyme catalyses L-homoserine + ATP = O-phospho-L-homoserine + ADP + H(+). Its pathway is amino-acid biosynthesis; L-threonine biosynthesis; L-threonine from L-aspartate: step 4/5. In terms of biological role, catalyzes the ATP-dependent phosphorylation of L-homoserine to L-homoserine phosphate. This is Homoserine kinase from Serratia proteamaculans (strain 568).